We begin with the raw amino-acid sequence, 84 residues long: CDC42 small effector protein 2 (84 aa).

2 S-palmitoyl cysteine lipidation sites follow: cysteine 10 and cysteine 11. The region spanning 29 to 42 (IGEPTNFAHTAHVG) is the CRIB domain. A phosphoserine mark is found at serine 43 and serine 52.

This sequence belongs to the CDC42SE/SPEC family. As to quaternary structure, interacts with CDC42 (in GTP-bound form). Interacts weakly with RAC1 and not at all with RHOA.

Its subcellular location is the cytoplasm. It is found in the cytoskeleton. The protein localises to the cell membrane. It localises to the cell projection. The protein resides in the phagocytic cup. Functionally, probably involved in the organization of the actin cytoskeleton by acting downstream of CDC42, inducing actin filament assembly. Alters CDC42-induced cell shape changes. In activated T-cells, may play a role in CDC42-mediated F-actin accumulation at the immunological synapse. May play a role in early contractile events in phagocytosis in macrophages. This is CDC42 small effector protein 2 (CDC42SE2) from Pongo abelii (Sumatran orangutan).